A 557-amino-acid polypeptide reads, in one-letter code: Probable protein kinase UbiB (557 aa).

The Protein kinase domain occupies 121 to 509 (SFDTVPLASA…RKLQTRVVTA (389 aa)). Residues 127 to 135 (LASASIAQV) and Lys-154 contribute to the ATP site. Residue Asp-289 is the Proton acceptor of the active site. Transmembrane regions (helical) follow at residues 506–526 (VVTA…YGLH) and 535–555 (VPVW…VAWL).

It belongs to the ABC1 family. UbiB subfamily.

The protein resides in the cell inner membrane. Its pathway is cofactor biosynthesis; ubiquinone biosynthesis [regulation]. Is probably a protein kinase regulator of UbiI activity which is involved in aerobic coenzyme Q (ubiquinone) biosynthesis. This is Probable protein kinase UbiB from Xanthomonas oryzae pv. oryzae (strain MAFF 311018).